We begin with the raw amino-acid sequence, 380 residues long: GDP-mannose:cellobiosyl-diphosphopolyprenol alpha-mannosyltransferase (380 aa).

Belongs to the glycosyltransferase group 1 family. Glycosyltransferase 4 subfamily.

It catalyses the reaction beta-D-Glc-(1-&gt;4)-alpha-D-Glc-di-trans,octa-cis-undecaprenyl diphosphate + GDP-alpha-D-mannose = alpha-D-Man-(1-&gt;3)-beta-D-Glc-(1-&gt;4)-alpha-D-Glc-1-di-trans,octa-cis-undecaprenyl diphosphate + GDP + H(+). Functionally, involved in the biosynthesis of the exopolysaccharide xanthan, a polymer that is comprised of repeating pentasaccharide units with the structure of a beta-(1,4)-linked D-glucose backbone with trisaccharide side chains composed of mannose-beta-(1,4)-glucuronic acid-beta-(1,2)-mannose attached to alternate glucose residues in the backbone by alpha-(1,3) linkages. Xanthan is involved in pathogenicity but has also been used in a variety of applications as a specialty polymer for commercial applications, including food additives, where they act as viscosifying, stabilizing, emulsifying, or gelling agents. In Xanthomonas campestris, this protein is GDP-mannose:cellobiosyl-diphosphopolyprenol alpha-mannosyltransferase (gumH).